A 149-amino-acid chain; its full sequence is UPF0178 protein Pmen_0294 (149 aa).

The protein belongs to the UPF0178 family.

The protein is UPF0178 protein Pmen_0294 of Ectopseudomonas mendocina (strain ymp) (Pseudomonas mendocina).